We begin with the raw amino-acid sequence, 1431 residues long: MAKEFQFNWKPTIIPELLHGSVFDRYDDESTCLELNAQVRIDENGFFLRWLIEGKDAVVLDMGQIWEARTGGLPKDGRIMFELEQRGASETIAERTIWITHGQDLVNVQSFFLVAESVELAKTCRAGINDILKSSRIRHVCPTTQLMKYHTWLTMNVNERRKIPIKLIIKTFSSGKPEKMVQKCLNDLGLGGDKYTPARVINRSMGKKFRNFYKCSRGRKRKEREELDVDILTFEKFQRLYNKICPRTEVQELFVKLSGQKEYLTKERLINFLNEEQRDPRLNEILFPFFDSQRIVALLKKHENDIKYQEDGKMSGDGFLRFLMSDENPPVFLDRIEMFMDMDQPLCHYYINSSHNTYLTGRQYGGKSSSEIYRQVLLSGCRCIELDCWDGTGENKGEPIITHGKAMCTDVFFKDVLVQIRDTAFARSDFPVVLSFENHCSKSNQLKMAKYCMDIFGDMLLSKPFEDAPLDPGVSLPSPNRLRKKILIKNKRLKTDIERHQLDQFLREGKLDEEDELNETPEVVGEDSVSPRSGGSGGTGAPEEVDDDTSDDDDDPSVQTSLNVMRTIPTVNTTSNNGSNRSARSSLDTPSPSGGSLMVPDRATSTATSIKNAVLARSPNFSSLRQKLSFKRRQSPLAGDQRAHPEVEQPVSSSSPATPSISGPPPCATSSGSTSSITITTTGCSTSSSGPSKHILGGEMPAKENDEAHPELKQNFIAKNLKGFGFSKKQPVLTKEEEERIFAEYHYTGATTNIHPLLSSLVNYTHPVKFSGFDVAEANNLHFHMSSFSESTGLGYLKQSAPEFVNYNKRQSSRIYPKGARVDSSNFLPQIFWNAGCQMVSLNFQTPDVYMQLNMGKFEYNGGSGYLLKPDFLRRPDRTFDPFSESPVDGVIAAHCSVRVISGQFLSDRKIGTYVEVEMYGLPTDTIRKEHKTKVIPGNGLNPVYNEDPFVFRKVVLPELAVLRFAVYDENGKQLGQRILPLDGLQAGYRHISLRSDTNQSFILSPVLFVQIVIKTYVPDELSGLVDALADPRAFLSEQKKRQEALAHMGVDDSDIPDVPNTRNMALRHVKQPPRQNGSSADLLANNGQTGSARGDQTSSMASSTIRSPNEQPQPVAVDKFKVDPIEVDDLRRDKAFAKLLKRFQKELDDLRKKHQKQRDSIQKQQPARRRNSSIAWIQTNVDKLITNNRRSTKKEKGSRRSLTASVSSGCGSASGTVTVSVCSPSGASCSGYSTGGPSTPVACNSDGTGSPATIGSPVPQDLVNNDRVRSLVNTQTGEWSAMVRRHDEEEFELKKVQLKEQFDLLRKLMSEAQKNQMLALKLRLEAEGKDLKQTQTKKSMEDAKVIQLDKGIKTKAERDRRVKELNEKNLKMFVEERKRLAMKAQKHEEQLTKRHLDQLEQLDKDFHKALDAEVGNYKEEQLAAQPTSVV.

One can recognise a PI-PLC X-box domain in the interval 340–491 (MDMDQPLCHY…LRKKILIKNK (152 aa)). His355 is a catalytic residue. Ca(2+) is bound by residues Asn356, Glu385, and Asp387. Residue His403 is part of the active site. Residue Glu437 coordinates Ca(2+). Substrate contacts are provided by Lys489 and Lys491. 2 disordered regions span residues 510 to 601 (KLDE…MVPD) and 632 to 692 (RRQS…SGPS). Residues 543–556 (EEVDDDTSDDDDDP) show a composition bias toward acidic residues. Composition is skewed to low complexity over residues 572-586 (NTTSNNGSNRSARSS), 652-661 (SSSSPATPSI), and 668-692 (ATSSGSTSSITITTTGCSTSSSGPS). Residues 758–874 (LSSLVNYTHP…GYLLKPDFLR (117 aa)) enclose the PI-PLC Y-box domain. Substrate contacts are provided by Ser787 and Arg814. The C2 domain maps to 877–1002 (DRTFDPFSES…SLRSDTNQSF (126 aa)). Disordered stretches follow at residues 1072–1119 (QPPR…VAVD), 1150–1176 (DLRKKHQKQRDSIQKQQPARRRNSSIA), and 1188–1216 (NNRRSTKKEKGSRRSLTASVSSGCGSASG). The span at 1074–1113 (PRQNGSSADLLANNGQTGSARGDQTSSMASSTIRSPNEQP) shows a compositional bias: polar residues. The stretch at 1135 to 1166 (KAFAKLLKRFQKELDDLRKKHQKQRDSIQKQQ) forms a coiled coil. The span at 1150–1162 (DLRKKHQKQRDSI) shows a compositional bias: basic and acidic residues. Positions 1191–1200 (RSTKKEKGSR) are enriched in basic residues. Low complexity predominate over residues 1204–1216 (TASVSSGCGSASG). Coiled-coil stretches lie at residues 1288–1318 (DEEEFELKKVQLKEQFDLLRKLMSEAQKNQM) and 1368–1402 (EKNLKMFVEERKRLAMKAQKHEEQLTKRHLDQLEQ).

It depends on Ca(2+) as a cofactor. As to expression, expressed in most or all neurons with high expression in the head and tail ganglia and low expression in the motor neurons of the ventral cord. Expressed in the intestine (at protein level). In males, expressed in vas deferens, spicule protractor muscles, diagonal muscles and a male-specific neuron.

It localises to the perikaryon. Its subcellular location is the cell projection. It is found in the axon. The protein localises to the synapse. The protein resides in the cell junction. It localises to the adherens junction. The catalysed reaction is a 1,2-diacyl-sn-glycero-3-phospho-(1D-myo-inositol-4,5-bisphosphate) + H2O = 1D-myo-inositol 1,4,5-trisphosphate + a 1,2-diacyl-sn-glycerol + H(+). Mediates the production of the second messenger molecules diacylglycerol (DAG) and inositol 1,4,5-trisphosphate (IP3) which plays an important role in the regulation of intracellular signaling cascades. Required in the nervous system to modulate neuronal activity. Facilitates synaptic transmission at neuromuscular junctions by regulating the release of acetylcholine from the motor neurons and thus affecting locomotion. Plays a role in efficient egg laying and defecation. Involved in axon regeneration after injury. Plays a role in male mating behavior by regulating spicule insertion and sperm transfer. By triggering Ca(2+) transient via IP3-mediated activation of IPR3 receptor itr-1 in ASH sensory neurons, regulates avoidance behavior in response to nose touch. By activating tpa-1 via DAG production, required for the expression of antimicrobial peptide nlp-29 in response to fungal infection. During embryogenesis, may play a role in epidermal morphogenesis together with plc-1. The sequence is that of 1-phosphatidylinositol 4,5-bisphosphate phosphodiesterase beta egl-8 from Caenorhabditis elegans.